The following is a 471-amino-acid chain: Ubiquitin carboxyl-terminal hydrolase calypso (471 aa).

Residues 45–276 (GWLELESDPG…IRFNLMAVVP (232 aa)) form the UCH catalytic domain. Cys-131 acts as the Nucleophile in catalysis. Catalysis depends on His-213, which acts as the Proton donor. 2 coiled-coil regions span residues 240-256 (WEDSEDWTDKFRRVMAE) and 298-324 (GTLQKLLKADEQGESGNGDSQRPDTPT). Positions 307–326 (DEQGESGNGDSQRPDTPTTL) are disordered. Positions 314–326 (NGDSQRPDTPTTL) are enriched in polar residues. The ULD domain occupies 375–403 (NYDKFICTFLSMLAHQGVLGELVSQHLLP). Residues 405-471 (KKVSGQGAAN…KGRNKCRKRK (67 aa)) form a positively charged C-terminal tail required for binding nucleosomes region. Residues 412–471 (AANRISKQSTTASAGGSTAAGTASTPKTQQQQAAAAKNGKSPSKTPGRRRKGRNKCRKRK) are disordered. Low complexity predominate over residues 420 to 447 (STTASAGGSTAAGTASTPKTQQQQAAAA). A compositionally biased stretch (basic residues) spans 457 to 471 (PGRRRKGRNKCRKRK).

This sequence belongs to the peptidase C12 family. BAP1 subfamily. As to quaternary structure, catalytic component of the polycomb repressive deubiquitinase (PR-DUB) complex, at least composed of caly/calypso, Asx and sba (MBD5/6 homolog). The PR-DUB complex associates with nucleosomes to mediate deubiquitination of histone H2AK118ub1 substrates; the association requires the positively charged C-terminal tail of caly, probably due to direct binding of DNA. Interacts (via ULD domain) with Asx (via DEUBAD domain); the interaction produces a stable heterodimer with a composite binding site for ubiquitin. Homodimerizes (via coiled-coil hinge-region between the UCH and ULD domains) to mediate assembly of 2 copies of the caly-Asx heterodimer into a bisymmetric tetramer; dimerization enhances PR-DUB association with nucleosomes.

It is found in the nucleus. The enzyme catalyses Thiol-dependent hydrolysis of ester, thioester, amide, peptide and isopeptide bonds formed by the C-terminal Gly of ubiquitin (a 76-residue protein attached to proteins as an intracellular targeting signal).. Catalytic component of the polycomb repressive deubiquitinase (PR-DUB) complex, a complex that specifically mediates deubiquitination of histone H2A monoubiquitinated at 'Lys-119' (H2AK118ub1). Mediates bisymmetric organization of the PR-DUB complex and is involved in association with nucleosomes to mediate deubiquitination. Does not deubiquitinate monoubiquitinated histone H2B. Required to maintain the transcriptionally repressive state of homeotic genes throughout development. The PR-DUB complex has weak or no activity toward 'Lys-48'- and 'Lys-63'-linked polyubiquitin chains. Polycomb group (PcG) protein. This Drosophila melanogaster (Fruit fly) protein is Ubiquitin carboxyl-terminal hydrolase calypso.